Here is a 347-residue protein sequence, read N- to C-terminus: NADH-ubiquinone oxidoreductase chain 2 (347 aa).

11 consecutive transmembrane segments (helical) span residues 3–23 (PPIL…VMTS), 25–45 (HWML…PILM), 59–79 (YFLT…INLL), 96–116 (ILMT…FWVP), 122–142 (ISLS…LSVL), 149–169 (INPN…GWGG), 178–198 (IMAY…LYNP), 201–221 (MFLN…LFMI), 237–257 (APLI…LPPL), 274–294 (EMII…YFYM), and 323–343 (MIFL…TPMI).

Belongs to the complex I subunit 2 family. Core subunit of respiratory chain NADH dehydrogenase (Complex I) which is composed of 45 different subunits. Interacts with TMEM242.

It localises to the mitochondrion inner membrane. It carries out the reaction a ubiquinone + NADH + 5 H(+)(in) = a ubiquinol + NAD(+) + 4 H(+)(out). Core subunit of the mitochondrial membrane respiratory chain NADH dehydrogenase (Complex I) which catalyzes electron transfer from NADH through the respiratory chain, using ubiquinone as an electron acceptor. Essential for the catalytic activity and assembly of complex I. This chain is NADH-ubiquinone oxidoreductase chain 2, found in Civettictis civetta (African civet).